Reading from the N-terminus, the 1867-residue chain is Probable serine/threonine-protein kinase roco8 (1867 aa).

The 78-residue stretch at 16–93 (SSDGLQIKDR…DDYIFYQFDN (78 aa)) folds into the DEP 1 domain. 2 disordered regions span residues 96 to 115 (NNNNINNNNNNATSTATTAT) and 121 to 225 (VSTK…NSFN). The segment covering 121-223 (VSTKIGSIGK…NSNSTYNSNS (103 aa)) has biased composition (low complexity). Positions 264–342 (GDKGLKLQKK…NNNNGGGGVM (79 aa)) constitute a DEP 2 domain. LRR repeat units lie at residues 491–512 (RLDDLCLTHKCISIIPTTIINT), 515–536 (FLRIIDLSFNQLSESNQLESIA), 540–561 (NLESCNLSHNQLSTLPSSFSRL), 563–584 (LLTKLILSHNCFQVIPNVVFQL), 586–607 (NLEELSLAANQLSSISESIGSL), 609–631 (SLEKLDLSFNKQINKIPKELGLL), 633–656 (RLKSLNVLGSNKINELPSFLSTLP), and 657–678 (LLEQLDFSRDIIKSPPKEITSK). The Roc domain occupies 693 to 941 (GTETLSHIKL…NEIIQTLLNQ (249 aa)). Disordered regions lie at residues 763–813 (QNGI…KKRP) and 942–961 (SNNNNNNNNNNNYNNNKQSN). Low complexity predominate over residues 768–793 (TSSSNLNLSTGTLPPPTQLSSSTSEL). One can recognise a COR domain in the interval 974–1111 (PSIYITLETN…ILYTLKNNSN (138 aa)). Positions 1163-1207 (SPSLSLSNSSQSVFTNPNNNNNNKSEQQQQQQQQQQQPQPISTSP) are disordered. The region spanning 1456 to 1864 (LIYQEEIGVG…TLNEIKDSTI (409 aa)) is the Protein kinase domain. Residues 1462 to 1470 (IGVGGFSRV) and Lys1483 contribute to the ATP site. The segment at 1509–1546 (SNSSLSISLSSSTSSLSPPIVNNNNNNNNLNNNLNNLN) is disordered. Asp1721 (proton acceptor) is an active-site residue.

This sequence belongs to the protein kinase superfamily. TKL Ser/Thr protein kinase family. ROCO subfamily.

The enzyme catalyses L-seryl-[protein] + ATP = O-phospho-L-seryl-[protein] + ADP + H(+). The catalysed reaction is L-threonyl-[protein] + ATP = O-phospho-L-threonyl-[protein] + ADP + H(+). The polypeptide is Probable serine/threonine-protein kinase roco8 (roco8) (Dictyostelium discoideum (Social amoeba)).